The chain runs to 311 residues: Probable manganese-dependent inorganic pyrophosphatase (311 aa).

Mn(2+) is bound by residues H9, D13, D15, D77, H99, and D151.

This sequence belongs to the PPase class C family. The cofactor is Mn(2+).

Its subcellular location is the cytoplasm. It catalyses the reaction diphosphate + H2O = 2 phosphate + H(+). In Streptococcus agalactiae serotype III (strain NEM316), this protein is Probable manganese-dependent inorganic pyrophosphatase.